A 191-amino-acid polypeptide reads, in one-letter code: Putative NADH dehydrogenase/NAD(P)H nitroreductase (191 aa).

127–132 (AAHSLG) is an NAD(+) binding site.

This sequence belongs to the nitroreductase family. FMN is required as a cofactor.

The protein is Putative NADH dehydrogenase/NAD(P)H nitroreductase of Methanothermobacter thermautotrophicus (strain ATCC 29096 / DSM 1053 / JCM 10044 / NBRC 100330 / Delta H) (Methanobacterium thermoautotrophicum).